The primary structure comprises 217 residues: Ribonuclease HII (217 aa).

In terms of domain architecture, RNase H type-2 spans 26–215 (EIVCGVDEAG…VREALDLMAG (190 aa)). The a divalent metal cation site is built by Asp-32, Glu-33, and Asp-124.

The protein belongs to the RNase HII family. Requires Mn(2+) as cofactor. Mg(2+) serves as cofactor.

The protein resides in the cytoplasm. The enzyme catalyses Endonucleolytic cleavage to 5'-phosphomonoester.. In terms of biological role, endonuclease that specifically degrades the RNA of RNA-DNA hybrids. This Burkholderia ambifaria (strain ATCC BAA-244 / DSM 16087 / CCUG 44356 / LMG 19182 / AMMD) (Burkholderia cepacia (strain AMMD)) protein is Ribonuclease HII.